The sequence spans 224 residues: ATP synthase subunit b (224 aa).

Residues 2–22 (TPSLGLIFWQSVIFLISFIIL) traverse the membrane as a helical segment.

This sequence belongs to the ATPase B chain family. As to quaternary structure, F-type ATPases have 2 components, F(1) - the catalytic core - and F(0) - the membrane proton channel. F(1) has five subunits: alpha(3), beta(3), gamma(1), delta(1), epsilon(1). F(0) has three main subunits: a(1), b(2) and c(10-14). The alpha and beta chains form an alternating ring which encloses part of the gamma chain. F(1) is attached to F(0) by a central stalk formed by the gamma and epsilon chains, while a peripheral stalk is formed by the delta and b chains.

The protein resides in the cell membrane. Functionally, f(1)F(0) ATP synthase produces ATP from ADP in the presence of a proton or sodium gradient. F-type ATPases consist of two structural domains, F(1) containing the extramembraneous catalytic core and F(0) containing the membrane proton channel, linked together by a central stalk and a peripheral stalk. During catalysis, ATP synthesis in the catalytic domain of F(1) is coupled via a rotary mechanism of the central stalk subunits to proton translocation. Its function is as follows. Component of the F(0) channel, it forms part of the peripheral stalk, linking F(1) to F(0). The polypeptide is ATP synthase subunit b (Karelsulcia muelleri (strain GWSS) (Sulcia muelleri)).